The chain runs to 221 residues: Phosphoribosylformylglycinamidine synthase subunit PurQ (221 aa).

The Glutamine amidotransferase type-1 domain maps to K2–K221. C87 serves as the catalytic Nucleophile. Active-site residues include H195 and E197.

As to quaternary structure, part of the FGAM synthase complex composed of 1 PurL, 1 PurQ and 2 PurS subunits.

The protein localises to the cytoplasm. The enzyme catalyses N(2)-formyl-N(1)-(5-phospho-beta-D-ribosyl)glycinamide + L-glutamine + ATP + H2O = 2-formamido-N(1)-(5-O-phospho-beta-D-ribosyl)acetamidine + L-glutamate + ADP + phosphate + H(+). It carries out the reaction L-glutamine + H2O = L-glutamate + NH4(+). It participates in purine metabolism; IMP biosynthesis via de novo pathway; 5-amino-1-(5-phospho-D-ribosyl)imidazole from N(2)-formyl-N(1)-(5-phospho-D-ribosyl)glycinamide: step 1/2. Its function is as follows. Part of the phosphoribosylformylglycinamidine synthase complex involved in the purines biosynthetic pathway. Catalyzes the ATP-dependent conversion of formylglycinamide ribonucleotide (FGAR) and glutamine to yield formylglycinamidine ribonucleotide (FGAM) and glutamate. The FGAM synthase complex is composed of three subunits. PurQ produces an ammonia molecule by converting glutamine to glutamate. PurL transfers the ammonia molecule to FGAR to form FGAM in an ATP-dependent manner. PurS interacts with PurQ and PurL and is thought to assist in the transfer of the ammonia molecule from PurQ to PurL. The sequence is that of Phosphoribosylformylglycinamidine synthase subunit PurQ from Deinococcus radiodurans (strain ATCC 13939 / DSM 20539 / JCM 16871 / CCUG 27074 / LMG 4051 / NBRC 15346 / NCIMB 9279 / VKM B-1422 / R1).